A 1594-amino-acid polypeptide reads, in one-letter code: NAD-specific glutamate dehydrogenase (1594 aa).

The active site involves K816.

It belongs to the Glu/Leu/Phe/Val dehydrogenases family. Interacts with (unphosphorylated) GarA.

It catalyses the reaction L-glutamate + NAD(+) + H2O = 2-oxoglutarate + NH4(+) + NADH + H(+). Activity is inhibited by unphosphorylated GarA. Stimulated by manganese and magnesium. Functionally, catalyzes the reversible conversion of L-glutamate to 2-oxoglutarate. Highly specific for NAD. In Mycolicibacterium smegmatis (strain ATCC 700084 / mc(2)155) (Mycobacterium smegmatis), this protein is NAD-specific glutamate dehydrogenase (gdh).